The following is a 212-amino-acid chain: 3-isopropylmalate dehydratase small subunit (212 aa).

The protein belongs to the LeuD family. LeuD type 1 subfamily. Heterodimer of LeuC and LeuD.

The catalysed reaction is (2R,3S)-3-isopropylmalate = (2S)-2-isopropylmalate. It functions in the pathway amino-acid biosynthesis; L-leucine biosynthesis; L-leucine from 3-methyl-2-oxobutanoate: step 2/4. In terms of biological role, catalyzes the isomerization between 2-isopropylmalate and 3-isopropylmalate, via the formation of 2-isopropylmaleate. The polypeptide is 3-isopropylmalate dehydratase small subunit (Pseudomonas aeruginosa (strain UCBPP-PA14)).